The chain runs to 98 residues: Carboxysome shell protein CsoS1C (98 aa).

The region spanning A8 to P93 is the BMC domain.

This sequence belongs to the bacterial microcompartments protein family. CsoS1 subfamily. In terms of assembly, homohexamer with a small central pore. Interacts with the N-terminus (residues 1-136) of RuBisCO (CbbL).

It is found in the carboxysome. Its function is as follows. One of shell proteins of the carboxysome, a polyhedral inclusion where RuBisCO (ribulose bisphosphate carboxylase, ccbL-ccbS) is sequestered. Assembles into hexamers which make sheets that form the facets of the polyhedral carboxysome. The shell probably limits the diffusion of CO(2) into and out of the carboxysome. There are estimated to be 2970 CsoS1A/CsoS1C proteins per carboxysome (the proteins differ by only 1 residue). Unlike beta-carboxysomes, alpha-carboxysomes (Cb) can form without cargo protein. CsoS2 is essential for Cb formation and is also capable of targeting foreign proteins to the Cb. The Cb shell assembles with the aid of CsoS2; CsoS1A, CsoS1B and CsoS1C form the majority of the shell while CsoS4A and CsoS4B form vertices. CsoS1D forms pseudohexamers that probably control metabolite flux into and out of the shell. The polypeptide is Carboxysome shell protein CsoS1C (Halothiobacillus neapolitanus (strain ATCC 23641 / c2) (Thiobacillus neapolitanus)).